Here is a 268-residue protein sequence, read N- to C-terminus: 4-hydroxy-tetrahydrodipicolinate reductase (268 aa).

NAD(+) is bound at residue 8-13 (GAAGRM). An NADP(+)-binding site is contributed by R36. NAD(+)-binding positions include 99-101 (GTT) and 123-126 (AANF). H156 serves as the catalytic Proton donor/acceptor. H157 provides a ligand contact to (S)-2,3,4,5-tetrahydrodipicolinate. The active-site Proton donor is K160. Position 166 to 167 (166 to 167 (GT)) interacts with (S)-2,3,4,5-tetrahydrodipicolinate.

Belongs to the DapB family.

The protein localises to the cytoplasm. It carries out the reaction (S)-2,3,4,5-tetrahydrodipicolinate + NAD(+) + H2O = (2S,4S)-4-hydroxy-2,3,4,5-tetrahydrodipicolinate + NADH + H(+). It catalyses the reaction (S)-2,3,4,5-tetrahydrodipicolinate + NADP(+) + H2O = (2S,4S)-4-hydroxy-2,3,4,5-tetrahydrodipicolinate + NADPH + H(+). It functions in the pathway amino-acid biosynthesis; L-lysine biosynthesis via DAP pathway; (S)-tetrahydrodipicolinate from L-aspartate: step 4/4. Functionally, catalyzes the conversion of 4-hydroxy-tetrahydrodipicolinate (HTPA) to tetrahydrodipicolinate. The polypeptide is 4-hydroxy-tetrahydrodipicolinate reductase (Pseudomonas fluorescens (strain SBW25)).